Consider the following 142-residue polypeptide: NADH-quinone oxidoreductase subunit A 2 (142 aa).

3 helical membrane-spanning segments follow: residues 18 to 38, 73 to 93, and 104 to 124; these read FLPL…LLLA, FYLI…IFAW, and GLVH…WLWL.

It belongs to the complex I subunit 3 family. In terms of assembly, NDH-1 is composed of 14 different subunits. Subunits NuoA, H, J, K, L, M, N constitute the membrane sector of the complex.

Its subcellular location is the cell inner membrane. The enzyme catalyses a quinone + NADH + 5 H(+)(in) = a quinol + NAD(+) + 4 H(+)(out). In terms of biological role, NDH-1 shuttles electrons from NADH, via FMN and iron-sulfur (Fe-S) centers, to quinones in the respiratory chain. The immediate electron acceptor for the enzyme in this species is believed to be ubiquinone. Couples the redox reaction to proton translocation (for every two electrons transferred, four hydrogen ions are translocated across the cytoplasmic membrane), and thus conserves the redox energy in a proton gradient. This chain is NADH-quinone oxidoreductase subunit A 2, found in Geobacter sulfurreducens (strain ATCC 51573 / DSM 12127 / PCA).